Here is a 758-residue protein sequence, read N- to C-terminus: MGTVEQKSTHTSPPTSPISRARSISGSIKSLFKPSSVQNSTPTVSPHESSPPLGNSDNLKKLVDTKRAELSSSRGAPPVNVNNVSNLSINTDVRPADDQPQVKSAKSPIIQTPKMAMNIVPQNIKSVLSSPRQSSSTNDRSSITSATSSVTSANDQKEKNYGSGNGSADDIPIAQLRLSEQDRAQDYTIDNALDTKDKSKPVKRNNSTSAFRGRKDKNFESSEYEIRSNSLSRIHSTPQNESPTVNNIHRGRPYSESISISSLKHIEQESKCILQVDNFKVFENGMHVHNLKIMPIVKSAQADAANDHDSNELNKQKSMFSLTSIFKSHKEDSGVDNSPLENLDNAVSLLPSIKNMAVYNRKRNISSSTAGTGGSDSDSIPDDLSERMVNPCAAIGAEELKLINTLSERINDAILCKSGKKSSHMLKEKDPDAMTFTQLYGKSMGVVLGHGAYGVVRLFSRNATERDPQYLQTYCNGQKMFFAVKELKPKSSEPKEKFSTRITSEFIIGHSLNHSEKKGGSKYSPNIIRVLDLLEISSGSFIEVLEFCPSGDLYNILTRKTKNGTALHPLEADCFMKQLLTGVQYMHSHGVAHCDLKPENILFHPNGLLKICDFGTSCVFQTAWEKNVHFQTGAVGSEPYVAPEEFIHDFNYDPRLVDCWSCGVVYCSMVLGHYLWKLAVKEKDPLYKAFYEEISSNKEFYVFEEMRHVNHEINRLRKISLYKIFQPNPDKRITIDQLLQSPWMKNTRCCIDYKTISS.

Disordered stretches follow at residues 1-170 (MGTV…SADD) and 189-252 (IDNA…HRGR). A compositionally biased stretch (polar residues) spans 22–57 (RSISGSIKSLFKPSSVQNSTPTVSPHESSPPLGNSD). Positions 58–69 (NLKKLVDTKRAE) are enriched in basic and acidic residues. Over residues 129 to 153 (SSPRQSSSTNDRSSITSATSSVTSA) the composition is skewed to low complexity. Over residues 216–226 (DKNFESSEYEI) the composition is skewed to basic and acidic residues. A compositionally biased stretch (polar residues) spans 227-247 (RSNSLSRIHSTPQNESPTVNN). The 303-residue stretch at 442–744 (KSMGVVLGHG…IDQLLQSPWM (303 aa)) folds into the Protein kinase domain. Residues 448–456 (LGHGAYGVV) and K485 each bind ATP. Residue D595 is the Proton acceptor of the active site.

It belongs to the protein kinase superfamily. CAMK Ser/Thr protein kinase family. NPR/HAL subfamily. HAL5 sub-subfamily.

The enzyme catalyses L-seryl-[protein] + ATP = O-phospho-L-seryl-[protein] + ADP + H(+). The catalysed reaction is L-threonyl-[protein] + ATP = O-phospho-L-threonyl-[protein] + ADP + H(+). In Vanderwaltozyma polyspora (strain ATCC 22028 / DSM 70294 / BCRC 21397 / CBS 2163 / NBRC 10782 / NRRL Y-8283 / UCD 57-17) (Kluyveromyces polysporus), this protein is Probable serine/threonine-protein kinase HAL5-like.